A 149-amino-acid polypeptide reads, in one-letter code: Squidulin (149 aa).

Ala1 is subject to N-acetylalanine. 4 consecutive EF-hand domains span residues 7 to 42 (KQIAEIKDAFDMFDIDGDGQITSKELRSVMKSLGRT), 43 to 78 (PSDAELEEMIREVDTDGNGTIEYAEFVEMMAKQMGP), 80 to 115 (DPEKEMREAFRVFDKDGNGLITAAELRQVMANFSDE), and 117 to 149 (LTSEEISEMIREADIDGDGMVNYEEFVKMMTPK). Ca(2+) contacts are provided by Asp20, Asp22, Asp24, Gln26, Glu31, Asp56, Asp58, Asn60, Thr62, Glu67, Asp93, Asp95, Asn97, Glu104, Asp130, Asp132, Asp134, Met136, and Glu141.

It belongs to the calmodulin family.

Not known. This protein has four functional calcium-binding sites. The protein is Squidulin of Doryteuthis pealeii (Longfin inshore squid).